We begin with the raw amino-acid sequence, 294 residues long: Movement protein (294 aa).

Interacts with nucleoprotein.

Its function is as follows. Transports viral genome to neighboring plant cells directly through plasmosdesmata, without any budding. The movement protein allows efficient cell to cell propagation, by bypassing the host cell wall barrier. Displays an RNA-binding activity. This chain is Movement protein (3), found in Rice yellow stunt virus (RYSV).